The sequence spans 416 residues: Homogentisate 1,2-dioxygenase (416 aa).

His-275 serves as the catalytic Proton acceptor. Residues His-318 and Glu-324 each contribute to the Fe cation site. Homogentisate-binding residues include Tyr-333 and His-354. His-354 is a Fe cation binding site.

The protein belongs to the homogentisate dioxygenase family. Hexamer; dimer of trimers. Fe cation serves as cofactor.

The catalysed reaction is homogentisate + O2 = 4-maleylacetoacetate + H(+). It participates in amino-acid degradation; L-phenylalanine degradation; acetoacetate and fumarate from L-phenylalanine: step 4/6. Its function is as follows. Involved in the catabolism of homogentisate (2,5-dihydroxyphenylacetate or 2,5-OH-PhAc), a central intermediate in the degradation of phenylalanine and tyrosine. Catalyzes the oxidative ring cleavage of the aromatic ring of homogentisate to yield maleylacetoacetate. The polypeptide is Homogentisate 1,2-dioxygenase (Legionella pneumophila (strain Lens)).